The sequence spans 408 residues: Homogentisate geranylgeranyltransferase (408 aa).

Residues 1–62 (MQAVTAAAAA…TVMHKFSAIS (62 aa)) constitute a chloroplast transit peptide. 9 helical membrane-spanning segments follow: residues 122–142 (HTIFGTIIGITSVSLLPMKSI), 156–176 (ALTAALCMNIYVVGLNQLYDI), 194–214 (SVATGVFLVLAFLIMSFSIGI), 221–241 (LMCALIVSFLLGSAYSIEAPF), 248–268 (ALLAASCILFVRAILVQLAFF), 286–306 (LVFATLFMCCFSAVIALFKDI), 329–349 (VYQLCISILLTAYGAATLVGA), 352–372 (TNLFQKIITVSGHGLLALTLW), and 386–406 (VTSFYMFIWKLFYAEYFLIPF).

It belongs to the UbiA prenyltransferase family. In terms of tissue distribution, expressed in seeds.

It localises to the plastid. Its subcellular location is the chloroplast membrane. It catalyses the reaction homogentisate + (2E,6E,10E)-geranylgeranyl diphosphate + H(+) = 6-geranylgeranyl-2-methylbenzene-1,4-diol + CO2 + diphosphate. The protein operates within cofactor biosynthesis; tocopherol biosynthesis. Functionally, involved in the synthesis of tocotrienol (vitamin E). Catalyzes the condensation of homogentisate and geranylgeranyl diphosphate to form 2-methyl-6-geranylgeranylbenzoquinol. Possesses low activity with phytyl diphosphate as substrate. This chain is Homogentisate geranylgeranyltransferase, found in Hordeum vulgare (Barley).